We begin with the raw amino-acid sequence, 196 residues long: MTQRIIGLTGGIATGKTTVANYLASAHNLPIFDADIYARDAVSLGSPILDAIARRYGKEILLPDGSLNRPKLGEMIFQNQDQRHWVESLIHPYVRDRFLKAIAESTSPILVLVIPLLIEVQMTNLVTEIWVVICSESQQLQRLMERNHLTLEQAQARINSQLSLKEKAAIADVVLDNSSSLDALLKQVDIALNFEL.

The DPCK domain occupies 5–196; it reads IIGLTGGIAT…QVDIALNFEL (192 aa). 13–18 serves as a coordination point for ATP; sequence ATGKTT.

This sequence belongs to the CoaE family.

Its subcellular location is the cytoplasm. The enzyme catalyses 3'-dephospho-CoA + ATP = ADP + CoA + H(+). It functions in the pathway cofactor biosynthesis; coenzyme A biosynthesis; CoA from (R)-pantothenate: step 5/5. Its function is as follows. Catalyzes the phosphorylation of the 3'-hydroxyl group of dephosphocoenzyme A to form coenzyme A. The sequence is that of Dephospho-CoA kinase from Nostoc sp. (strain PCC 7120 / SAG 25.82 / UTEX 2576).